The primary structure comprises 449 residues: Glucose-6-phosphate isomerase (449 aa).

The Proton donor role is filled by Glu-291. Catalysis depends on residues His-312 and Lys-426.

Belongs to the GPI family.

Its subcellular location is the cytoplasm. It catalyses the reaction alpha-D-glucose 6-phosphate = beta-D-fructose 6-phosphate. It functions in the pathway carbohydrate biosynthesis; gluconeogenesis. The protein operates within carbohydrate degradation; glycolysis; D-glyceraldehyde 3-phosphate and glycerone phosphate from D-glucose: step 2/4. Functionally, catalyzes the reversible isomerization of glucose-6-phosphate to fructose-6-phosphate. The chain is Glucose-6-phosphate isomerase from Streptococcus pyogenes serotype M28 (strain MGAS6180).